The following is a 443-amino-acid chain: Glucose-6-phosphate isomerase (443 aa).

E285 serves as the catalytic Proton donor. Residues H306 and K420 contribute to the active site.

It belongs to the GPI family.

The protein localises to the cytoplasm. It catalyses the reaction alpha-D-glucose 6-phosphate = beta-D-fructose 6-phosphate. The protein operates within carbohydrate biosynthesis; gluconeogenesis. It participates in carbohydrate degradation; glycolysis; D-glyceraldehyde 3-phosphate and glycerone phosphate from D-glucose: step 2/4. Catalyzes the reversible isomerization of glucose-6-phosphate to fructose-6-phosphate. This chain is Glucose-6-phosphate isomerase, found in Staphylococcus haemolyticus (strain JCSC1435).